A 432-amino-acid polypeptide reads, in one-letter code: Cyclic GMP-AMP synthase (432 aa).

110–115 (QGSFQY) serves as a coordination point for GTP. Positions 129 and 131 each coordinate Mg(2+). Arginine 180 is an ATP binding site. Aspartate 191 is a Mg(2+) binding site. An ATP-binding site is contributed by serine 255. GTP contacts are provided by lysine 283, serine 297, and aspartate 344. A disordered region spans residues 413–432 (LNAPSKEPSSKPINKTMVSG). The segment covering 423–432 (KPINKTMVSG) has biased composition (polar residues).

The protein belongs to the CD-NTase family. A01 subfamily. Mg(2+) serves as cofactor.

It carries out the reaction GTP + ATP = 3',3'-cGAMP + 2 diphosphate. Cyclic nucleotide synthase (second messenger synthase) of a CBASS antivirus system. CBASS (cyclic oligonucleotide-based antiphage signaling system) provides immunity against bacteriophage. The CD-NTase protein synthesizes cyclic nucleotides in response to infection; these serve as specific second messenger signals. The signals activate a diverse range of effectors, leading to bacterial cell death and thus abortive phage infection. A type II-C(GA) CBASS system. Its function is as follows. Catalyzes the synthesis of 3'3'-cyclic GMP-AMP (3'3'-cGAMP) from GTP and ATP, a second messenger in cell signal transduction. Is also able to produce c-di-AMP and c-di-GMP from ATP and GTP, respectively; however, 3'3'-cGAMP is the dominant molecule produced by DncV in vivo, contrary to the 2'3'-cGAMP produced by eukaryotes. By producing cGAMP, down-regulates csgD expression and expression of flagellum regulon genes, which leads to the down-regulation of rdar biofilm formation and flagellum-mediated swimming and swarming motility in a temperature-dependent manner. Controls the activity of cGAMP-activated phospholipase CapV, a patatin-like lipase that is a direct 3',3'-cGAMP receptor encoded in the dncV operon. In Escherichia coli, this protein is Cyclic GMP-AMP synthase.